The primary structure comprises 204 residues: Thymidylate kinase (204 aa).

9–16 (GIEASGKT) contributes to the ATP binding site.

Belongs to the thymidylate kinase family.

The enzyme catalyses dTMP + ATP = dTDP + ADP. Functionally, phosphorylation of dTMP to form dTDP in both de novo and salvage pathways of dTTP synthesis. This is Thymidylate kinase from Sulfurihydrogenibium sp. (strain YO3AOP1).